A 431-amino-acid chain; its full sequence is NADH-quinone oxidoreductase subunit D 2 (431 aa).

The segment at 1–27 is disordered; the sequence is MNDHKGLGGLDTEATPGSFGAGEPPRA.

This sequence belongs to the complex I 49 kDa subunit family. As to quaternary structure, NDH-1 is composed of 14 different subunits. Subunits NuoB, C, D, E, F, and G constitute the peripheral sector of the complex.

It is found in the cell inner membrane. The enzyme catalyses a quinone + NADH + 5 H(+)(in) = a quinol + NAD(+) + 4 H(+)(out). NDH-1 shuttles electrons from NADH, via FMN and iron-sulfur (Fe-S) centers, to quinones in the respiratory chain. The immediate electron acceptor for the enzyme in this species is believed to be ubiquinone. Couples the redox reaction to proton translocation (for every two electrons transferred, four hydrogen ions are translocated across the cytoplasmic membrane), and thus conserves the redox energy in a proton gradient. This Anaeromyxobacter sp. (strain Fw109-5) protein is NADH-quinone oxidoreductase subunit D 2.